The sequence spans 84 residues: Cell division topological specificity factor (84 aa).

The protein belongs to the MinE family.

Its function is as follows. Prevents the cell division inhibition by proteins MinC and MinD at internal division sites while permitting inhibition at polar sites. This ensures cell division at the proper site by restricting the formation of a division septum at the midpoint of the long axis of the cell. This Cupriavidus taiwanensis (strain DSM 17343 / BCRC 17206 / CCUG 44338 / CIP 107171 / LMG 19424 / R1) (Ralstonia taiwanensis (strain LMG 19424)) protein is Cell division topological specificity factor.